The sequence spans 59 residues: MRIMKFFKDVGKEMKKVSWPKGKELTRYTITVISTVIFFVIFFALLDTGISQLIRLIVE.

Residues 30–50 (ITVISTVIFFVIFFALLDTGI) traverse the membrane as a helical segment.

The protein belongs to the SecE/SEC61-gamma family. As to quaternary structure, component of the Sec protein translocase complex. Heterotrimer consisting of SecY, SecE and SecG subunits. The heterotrimers can form oligomers, although 1 heterotrimer is thought to be able to translocate proteins. Interacts with the ribosome. Interacts with SecDF, and other proteins may be involved. Interacts with SecA.

It localises to the cell membrane. In terms of biological role, essential subunit of the Sec protein translocation channel SecYEG. Clamps together the 2 halves of SecY. May contact the channel plug during translocation. In Bacillus subtilis (strain 168), this protein is Protein translocase subunit SecE.